Reading from the N-terminus, the 519-residue chain is Lysine 5,6-aminomutase alpha subunit (519 aa).

Position 57 to 59 (57 to 59 (DEV)) interacts with adenosylcob(III)alamin. Pyridoxal 5'-phosphate contacts are provided by residues 187 to 192 (RTTGQS), S241, Y266, R271, and N302.

The protein belongs to the KamD family. Heterotetramer of 2 alpha and 2 beta subunits. Requires adenosylcob(III)alamin as cofactor. Pyridoxal 5'-phosphate is required as a cofactor.

The catalysed reaction is (3S)-3,6-diaminohexanoate = (3S,5S)-3,5-diaminohexanoate. The enzyme catalyses D-lysine = (2R,5S)-2,5-diaminohexanoate. It functions in the pathway amino-acid metabolism; lysine degradation. With respect to regulation, rapidly inactivated in the presence of D-lysine and to a lesser extent in the absence of adenosylcobalamin (Adocbl). Activity is stable in the presence of Adocbl when D-lysine is absent. Adocbl imparts thermal stability at 37 degrees Celsius. In terms of biological role, catalyzes the migration of the L-beta-lysine and D-lysine epsilon amino group to the delta carbon to produce 3,5-diaminohexanoate and 2,5-diaminohexanoate, respectively. The sequence is that of Lysine 5,6-aminomutase alpha subunit (kamD) from Acetoanaerobium sticklandii (strain ATCC 12662 / DSM 519 / JCM 1433 / CCUG 9281 / NCIMB 10654 / HF) (Clostridium sticklandii).